Reading from the N-terminus, the 512-residue chain is Lysine--tRNA ligase (512 aa).

Mg(2+) is bound by residues Glu-408 and Glu-415.

It belongs to the class-II aminoacyl-tRNA synthetase family. In terms of assembly, homodimer. It depends on Mg(2+) as a cofactor.

It localises to the cytoplasm. It catalyses the reaction tRNA(Lys) + L-lysine + ATP = L-lysyl-tRNA(Lys) + AMP + diphosphate. The polypeptide is Lysine--tRNA ligase (Prochlorococcus marinus (strain MIT 9301)).